The following is a 488-amino-acid chain: Ribulose bisphosphate carboxylase large chain (488 aa).

The substrate site is built by Asn127 and Thr177. Residue Lys179 is the Proton acceptor of the active site. Position 181 (Lys181) interacts with substrate. Residues Lys205, Asp207, and Glu208 each coordinate Mg(2+). N6-carboxylysine is present on Lys205. The active-site Proton acceptor is His297. Substrate is bound by residues Arg298, His330, and Ser382.

It belongs to the RuBisCO large chain family. Type I subfamily. In terms of assembly, heterohexadecamer of 8 large chains and 8 small chains. Requires Mg(2+) as cofactor.

The protein resides in the plastid. It is found in the chloroplast. The catalysed reaction is 2 (2R)-3-phosphoglycerate + 2 H(+) = D-ribulose 1,5-bisphosphate + CO2 + H2O. It catalyses the reaction D-ribulose 1,5-bisphosphate + O2 = 2-phosphoglycolate + (2R)-3-phosphoglycerate + 2 H(+). Functionally, ruBisCO catalyzes two reactions: the carboxylation of D-ribulose 1,5-bisphosphate, the primary event in carbon dioxide fixation, as well as the oxidative fragmentation of the pentose substrate in the photorespiration process. Both reactions occur simultaneously and in competition at the same active site. The protein is Ribulose bisphosphate carboxylase large chain of Guillardia theta (Cryptophyte).